We begin with the raw amino-acid sequence, 123 residues long: F-box protein PP2-B3 (123 aa).

Residues 10 to 56 (PSPFDGLPENCISNIISFTTPRDACFAASVSKAFESAVQSDSVWEKF) enclose the F-box domain.

In Arabidopsis thaliana (Mouse-ear cress), this protein is F-box protein PP2-B3 (PP2B3).